Consider the following 111-residue polypeptide: Large ribosomal subunit protein uL23 (111 aa).

It belongs to the universal ribosomal protein uL23 family. Part of the 50S ribosomal subunit. Contacts protein L29, and trigger factor when it is bound to the ribosome.

One of the early assembly proteins it binds 23S rRNA. One of the proteins that surrounds the polypeptide exit tunnel on the outside of the ribosome. Forms the main docking site for trigger factor binding to the ribosome. This chain is Large ribosomal subunit protein uL23, found in Chlamydia caviae (strain ATCC VR-813 / DSM 19441 / 03DC25 / GPIC) (Chlamydophila caviae).